An 806-amino-acid chain; its full sequence is Fibroblast growth factor receptor 3 (806 aa).

The N-terminal stretch at 1-19 is a signal peptide; it reads MRAAWGSVWCLCLAAAVGA. The Extracellular segment spans residues 20–364; that stretch reads LPAARRRGAE…ELMEMDDSGS (345 aa). The 101-residue stretch at 24-124 folds into the Ig-like C2-type 1 domain; it reads RRRGAERSGG…VLGNFTVRVT (101 aa). Cys-61 and Cys-107 are oxidised to a cystine. N-linked (GlcNAc...) asparagine glycosylation is found at Asn-83, Asn-96, and Asn-118. The disordered stretch occupies residues 121-146; the sequence is VRVTDSPSSGDDEDDDDESEDTGVPF. Over residues 130-141 the composition is skewed to acidic residues; sequence GDDEDDDDESED. 2 consecutive Ig-like C2-type domains span residues 150–238 and 247–349; these read PDKM…YQLD and PILQ…AWLT. An intrachain disulfide couples Cys-170 to Cys-222. Asn-219, Asn-256, Asn-288, Asn-309, and Asn-322 each carry an N-linked (GlcNAc...) asparagine glycan. Cys-269 and Cys-333 form a disulfide bridge. The chain crosses the membrane as a helical span at residues 365 to 389; the sequence is VYAGILSYGTGLVLFILVLVIVIIC. The Cytoplasmic segment spans residues 390–806; it reads RMKMPNKKAM…HVPCNGVIRT (417 aa). The 290-residue stretch at 466–755 folds into the Protein kinase domain; the sequence is LTLGKPLGEG…LTMTSTDEYL (290 aa). Residues 472–480 and Lys-502 contribute to the ATP site; that span reads LGEGCFGQV. Asp-611 acts as the Proton acceptor in catalysis. Tyr-641, Tyr-642, Tyr-718, and Tyr-754 each carry phosphotyrosine; by autocatalysis.

This sequence belongs to the protein kinase superfamily. Tyr protein kinase family. Fibroblast growth factor receptor subfamily. Monomer. Homodimer after ligand binding. In terms of processing, autophosphorylated. Binding of FGF family members together with heparan sulfate proteoglycan or heparin promotes receptor dimerization and autophosphorylation on tyrosine residues. Autophosphorylation occurs in trans between the two FGFR molecules present in the dimer.

The protein localises to the cell membrane. The catalysed reaction is L-tyrosyl-[protein] + ATP = O-phospho-L-tyrosyl-[protein] + ADP + H(+). Present in an inactive conformation in the absence of bound ligand. Ligand binding leads to dimerization and activation by autophosphorylation on tyrosine residues. In terms of biological role, tyrosine-protein kinase that acts as a cell-surface receptor for fibroblast growth factors and plays an essential role in the regulation of cell proliferation, differentiation and apoptosis. Plays an essential role in the regulation of chondrocyte differentiation, proliferation and apoptosis, and is required for normal skeleton development. Regulates both osteogenesis and postnatal bone mineralization by osteoblasts. Promotes apoptosis in chondrocytes, but can also promote cancer cell proliferation. Phosphorylates PLCG1, CBL and FRS2. Ligand binding leads to the activation of several signaling cascades. Activation of PLCG1 leads to the production of the cellular signaling molecules diacylglycerol and inositol 1,4,5-trisphosphate. Phosphorylation of FRS2 triggers recruitment of GRB2, GAB1, PIK3R1 and SOS1, and mediates activation of RAS, MAPK1/ERK2, MAPK3/ERK1 and the MAP kinase signaling pathway, as well as of the AKT1 signaling pathway. The polypeptide is Fibroblast growth factor receptor 3 (FGFR3) (Gallus gallus (Chicken)).